The sequence spans 257 residues: Protein-tyrosine-phosphatase IBR5 (257 aa).

The 137-residue stretch at 49 to 185 (FPSEILPEFL…LQEFEQGIFG (137 aa)) folds into the Tyrosine-protein phosphatase domain. C129 acts as the Phosphocysteine intermediate in catalysis. The tract at residues 235 to 257 (QEFTFGATPPKPTTGGDIAMDGS) is disordered.

This sequence belongs to the protein-tyrosine phosphatase family. Interacts with SKP1A/ASK1 and with MPK12. Expressed in root tips and vasculature, cotyledons, stems, leaves vasculature and hydathodes, flowers, siliques, and seeds.

The protein resides in the nucleus. It carries out the reaction O-phospho-L-tyrosyl-[protein] + H2O = L-tyrosyl-[protein] + phosphate. Its function is as follows. Required for the transduction of auxin and abscisic acid (ABA) signaling pathways. Dephosphorylates and inactivates the MAP kinase MPK12. The protein is Protein-tyrosine-phosphatase IBR5 (IBR5) of Arabidopsis thaliana (Mouse-ear cress).